An 84-amino-acid chain; its full sequence is Large ribosomal subunit protein bL31B (84 aa).

Belongs to the bacterial ribosomal protein bL31 family. Type B subfamily. As to quaternary structure, part of the 50S ribosomal subunit.

This is Large ribosomal subunit protein bL31B from Bacteroides thetaiotaomicron (strain ATCC 29148 / DSM 2079 / JCM 5827 / CCUG 10774 / NCTC 10582 / VPI-5482 / E50).